We begin with the raw amino-acid sequence, 930 residues long: Isoleucine--tRNA ligase (930 aa).

Positions 57–67 (PYANGNIHVGH) match the 'HIGH' region motif. Glu554 contacts L-isoleucyl-5'-AMP. Positions 595–599 (KMSKS) match the 'KMSKS' region motif. Lys598 contacts ATP. Zn(2+)-binding residues include Cys888, Cys891, Cys908, and Cys911.

The protein belongs to the class-I aminoacyl-tRNA synthetase family. IleS type 1 subfamily. Monomer. Zn(2+) serves as cofactor.

The protein localises to the cytoplasm. The enzyme catalyses tRNA(Ile) + L-isoleucine + ATP = L-isoleucyl-tRNA(Ile) + AMP + diphosphate. Functionally, catalyzes the attachment of isoleucine to tRNA(Ile). As IleRS can inadvertently accommodate and process structurally similar amino acids such as valine, to avoid such errors it has two additional distinct tRNA(Ile)-dependent editing activities. One activity is designated as 'pretransfer' editing and involves the hydrolysis of activated Val-AMP. The other activity is designated 'posttransfer' editing and involves deacylation of mischarged Val-tRNA(Ile). The protein is Isoleucine--tRNA ligase of Streptococcus pneumoniae (strain ATCC BAA-255 / R6).